The primary structure comprises 487 residues: MSFTLAIVGRPNVGKSTLFNRLVGKRLALVDDQPGVTRDLREGDARLIDLRFTVIDTAGLEEVTDDSLQGRMRRLTERAVEMADVCLFLIDGRVGVTPSDEVFADILRKKNAHVILGVNKAEGRAGDAGAIEAWSLGLGEPVRLSAEHGEGMDDLYHILRPIAEGFAERAAADAPVVDVDVSEEEADLEADPDAHKPTVKRPLQIAVIGRPNAGKSTLINKIIGEDRLLTGPEAGITRDAISVRSEWQGTPIRIFDTAGMRKKARISDKLEKLSVADGLRAVRFAEVVVVLLDVEIPFEQQDLRIADFAETEGRAVVVAVNKWDLEGEKQEKLAELKEMFDRLLPQLRGAPLVTVSAKTGRGLDRLHAAILKAHDIWNRRITTARLNSWLGAMVEAHPPPAPGGRRIKLRYMTQVKTRPPGFVVMCSHPDEMPDSYRRYLVNGLRDHFDMPGTPIRLTMRGQGDKNPFKERKFRTPSRLRKHLGKKG.

EngA-type G domains lie at 3 to 167 (FTLA…EGFA) and 203 to 378 (LQIA…DIWN). Residues 9-16 (GRPNVGKS), 56-60 (DTAGL), 119-122 (NKAE), 209-216 (GRPNAGKS), 256-260 (DTAGM), and 321-324 (NKWD) each bind GTP. One can recognise a KH-like domain in the interval 379-463 (RRITTARLNS…PIRLTMRGQG (85 aa)). Positions 459-487 (MRGQGDKNPFKERKFRTPSRLRKHLGKKG) are disordered. Residues 471 to 487 (RKFRTPSRLRKHLGKKG) are compositionally biased toward basic residues.

This sequence belongs to the TRAFAC class TrmE-Era-EngA-EngB-Septin-like GTPase superfamily. EngA (Der) GTPase family. In terms of assembly, associates with the 50S ribosomal subunit.

In terms of biological role, GTPase that plays an essential role in the late steps of ribosome biogenesis. The polypeptide is GTPase Der (Cereibacter sphaeroides (strain ATCC 17025 / ATH 2.4.3) (Rhodobacter sphaeroides)).